Here is a 250-residue protein sequence, read N- to C-terminus: 3-deoxy-manno-octulosonate cytidylyltransferase 1 (250 aa).

It belongs to the KdsB family.

The protein localises to the cytoplasm. The catalysed reaction is 3-deoxy-alpha-D-manno-oct-2-ulosonate + CTP = CMP-3-deoxy-beta-D-manno-octulosonate + diphosphate. Its pathway is nucleotide-sugar biosynthesis; CMP-3-deoxy-D-manno-octulosonate biosynthesis; CMP-3-deoxy-D-manno-octulosonate from 3-deoxy-D-manno-octulosonate and CTP: step 1/1. It participates in bacterial outer membrane biogenesis; lipopolysaccharide biosynthesis. In terms of biological role, activates KDO (a required 8-carbon sugar) for incorporation into bacterial lipopolysaccharide in Gram-negative bacteria. The chain is 3-deoxy-manno-octulosonate cytidylyltransferase 1 from Actinobacillus pleuropneumoniae serotype 5b (strain L20).